A 264-amino-acid polypeptide reads, in one-letter code: ECF RNA polymerase sigma factor BldN (264 aa).

The segment at 1–87 (MYPHVGVDAS…PAADSDSARM (87 aa)) is not required for transcription in vitro. A disordered region spans residues 64–83 (RSSSSGAAATTHRRPAADSD). The tract at residues 105–172 (LYDQYSDTVY…LVADHFKSSR (68 aa)) is sigma-70 factor domain-2. The short motif at 129-132 (DLTS) is the Polymerase core binding element. A sigma-70 factor domain-4 region spans residues 204 to 255 (ALLDAVRRLNPQQQECVTLRFLQGLSVAETARVMGKNEGAIKTLQYRAVRTL).

Belongs to the sigma-70 factor family. ECF subfamily. Post-translationally, two forms of protein exist; a 35 kDa form in early growth and a 28 kDa form seen in later stages (at protein level). In liquid culture the larger form accumulates to higher level than on solid media. The shorter form results from processing just upstream of Met-87; the exact position is unknown. There are 4 possible start codons; mutation of the first prevents protein production while mutation of the other 3 (Val-44, Met-87 and Met-88) permits production of both forms. Introduction of stop codons between the first and second, or second and third possible start codons also prevents protein production, corroborating that the annotated start codon is the correct one.

Sigma factors are initiation factors that promote the attachment of RNA polymerase to specific initiation sites and are then released. Extracytoplasmic function (ECF) sigma factors are usually held in an inactive form by an anti-sigma factor until released. ECF sigma factor involved in aerial mycelium formation, required for translation from the bldMp1 promoter. Expressed as a preprotein; processing and accumulation of the mature protein starts as aerial mycelium formation and sporulation commence. Activates expression of about 17 genes, including those for rdlA and most of the chaplins (chpA to chpH); chaplin activation is indirect. This chain is ECF RNA polymerase sigma factor BldN, found in Streptomyces coelicolor (strain ATCC BAA-471 / A3(2) / M145).